Reading from the N-terminus, the 347-residue chain is tRNA pseudouridine synthase D (347 aa).

Asp-81 functions as the Nucleophile in the catalytic mechanism. A TRUD domain is found at Gly-158–Lys-305.

The protein belongs to the pseudouridine synthase TruD family.

It carries out the reaction uridine(13) in tRNA = pseudouridine(13) in tRNA. Responsible for synthesis of pseudouridine from uracil-13 in transfer RNAs. In Vibrio campbellii (strain ATCC BAA-1116), this protein is tRNA pseudouridine synthase D.